Consider the following 530-residue polypeptide: G2/mitotic-specific cyclin-B (530 aa).

Positions 76-152 are disordered; that stretch reads ARVDSHWKKQ…EPTLKREDSN (77 aa). Positions 121–144 are enriched in low complexity; the sequence is PTKTTVEPTKVTVKSSSSENVNEP. Position 137 is a phosphoserine (serine 137).

Belongs to the cyclin family. Cyclin AB subfamily. As to quaternary structure, interacts with the protein kinase Cdk1 to form a serine/threonine kinase holoenzyme complex also known as maturation promoting factor (MPF). The cyclin subunit imparts substrate specificity to the complex.

Functionally, essential for the control of the cell cycle at the G2/M (mitosis) transition. The polypeptide is G2/mitotic-specific cyclin-B (CycB) (Drosophila melanogaster (Fruit fly)).